Reading from the N-terminus, the 432-residue chain is Adenylosuccinate synthetase (432 aa).

GTP is bound by residues 12-18 (GDEGKGK) and 40-42 (GHT). Catalysis depends on D13, which acts as the Proton acceptor. Residues D13 and G40 each coordinate Mg(2+). IMP is bound by residues 13–16 (DEGK), 38–41 (NAGH), T132, R146, Q226, T241, and R305. Catalysis depends on H41, which acts as the Proton donor. Residue 301 to 307 (TVTGRKR) coordinates substrate. GTP is bound by residues R307, 333-335 (KLD), and 415-417 (STS).

Belongs to the adenylosuccinate synthetase family. As to quaternary structure, homodimer. It depends on Mg(2+) as a cofactor.

It localises to the cytoplasm. The enzyme catalyses IMP + L-aspartate + GTP = N(6)-(1,2-dicarboxyethyl)-AMP + GDP + phosphate + 2 H(+). Its pathway is purine metabolism; AMP biosynthesis via de novo pathway; AMP from IMP: step 1/2. Its function is as follows. Plays an important role in the de novo pathway of purine nucleotide biosynthesis. Catalyzes the first committed step in the biosynthesis of AMP from IMP. This is Adenylosuccinate synthetase from Chelativorans sp. (strain BNC1).